The chain runs to 308 residues: Transaldolase (308 aa).

The active-site Schiff-base intermediate with substrate is the Lys125.

It belongs to the transaldolase family. Type 1 subfamily. Homodimer.

The protein resides in the cytoplasm. The enzyme catalyses D-sedoheptulose 7-phosphate + D-glyceraldehyde 3-phosphate = D-erythrose 4-phosphate + beta-D-fructose 6-phosphate. It participates in carbohydrate degradation; pentose phosphate pathway; D-glyceraldehyde 3-phosphate and beta-D-fructose 6-phosphate from D-ribose 5-phosphate and D-xylulose 5-phosphate (non-oxidative stage): step 2/3. Its function is as follows. Transaldolase is important for the balance of metabolites in the pentose-phosphate pathway. In Ectopseudomonas mendocina (strain ymp) (Pseudomonas mendocina), this protein is Transaldolase.